Here is a 146-residue protein sequence, read N- to C-terminus: Prefoldin subunit alpha (146 aa).

It belongs to the prefoldin alpha subunit family. As to quaternary structure, heterohexamer of two alpha and four beta subunits.

Its subcellular location is the cytoplasm. In terms of biological role, molecular chaperone capable of stabilizing a range of proteins. Seems to fulfill an ATP-independent, HSP70-like function in archaeal de novo protein folding. The sequence is that of Prefoldin subunit alpha from Methanobrevibacter smithii (strain ATCC 35061 / DSM 861 / OCM 144 / PS).